Here is a 913-residue protein sequence, read N- to C-terminus: Valine--tRNA ligase (913 aa).

The 'HIGH' region motif lies at 48–58; that stretch reads PNVTGSLHMGH. The short motif at 541–545 is the 'KMSKS' region element; it reads KMSKS. Lys544 serves as a coordination point for ATP. Residues 839-907 are a coiled coil; that stretch reads VVDLEALVSK…IEHRLQSLGV (69 aa).

It belongs to the class-I aminoacyl-tRNA synthetase family. ValS type 1 subfamily. As to quaternary structure, monomer.

The protein localises to the cytoplasm. It catalyses the reaction tRNA(Val) + L-valine + ATP = L-valyl-tRNA(Val) + AMP + diphosphate. In terms of biological role, catalyzes the attachment of valine to tRNA(Val). As ValRS can inadvertently accommodate and process structurally similar amino acids such as threonine, to avoid such errors, it has a 'posttransfer' editing activity that hydrolyzes mischarged Thr-tRNA(Val) in a tRNA-dependent manner. This chain is Valine--tRNA ligase, found in Thermosynechococcus vestitus (strain NIES-2133 / IAM M-273 / BP-1).